Reading from the N-terminus, the 161-residue chain is ATP synthase subunit b' (161 aa).

The chain crosses the membrane as a helical span at residues 30–47 (VMAIQFLVLAALLNKLFY).

It belongs to the ATPase B chain family. In terms of assembly, F-type ATPases have 2 components, F(1) - the catalytic core - and F(0) - the membrane proton channel. F(1) has five subunits: alpha(3), beta(3), gamma(1), delta(1), epsilon(1). F(0) has four main subunits: a(1), b(1), b'(1) and c(10-14). The alpha and beta chains form an alternating ring which encloses part of the gamma chain. F(1) is attached to F(0) by a central stalk formed by the gamma and epsilon chains, while a peripheral stalk is formed by the delta, b and b' chains.

Its subcellular location is the cellular thylakoid membrane. Functionally, f(1)F(0) ATP synthase produces ATP from ADP in the presence of a proton or sodium gradient. F-type ATPases consist of two structural domains, F(1) containing the extramembraneous catalytic core and F(0) containing the membrane proton channel, linked together by a central stalk and a peripheral stalk. During catalysis, ATP synthesis in the catalytic domain of F(1) is coupled via a rotary mechanism of the central stalk subunits to proton translocation. In terms of biological role, component of the F(0) channel, it forms part of the peripheral stalk, linking F(1) to F(0). The b'-subunit is a diverged and duplicated form of b found in plants and photosynthetic bacteria. The protein is ATP synthase subunit b' of Picosynechococcus sp. (strain ATCC 27264 / PCC 7002 / PR-6) (Agmenellum quadruplicatum).